The following is a 371-amino-acid chain: Alanine dehydrogenase (371 aa).

Arg15 and Lys75 together coordinate substrate. Residue His96 is the Proton donor/acceptor of the active site. NAD(+) contacts are provided by residues Ser134, 178 to 179 (TA), Asp198, Lys203, Ser220, 239 to 240 (VL), 267 to 270 (IAID), Arg279, and 298 to 301 (VANM). Residue Asp270 is the Proton donor/acceptor of the active site. 2 residues coordinate Mg(2+): Glu323 and His327.

This sequence belongs to the AlaDH/PNT family. In terms of assembly, homohexamer. Trimer of dimers. Requires Mg(2+) as cofactor.

It is found in the secreted. The enzyme catalyses L-alanine + NAD(+) + H2O = pyruvate + NH4(+) + NADH + H(+). It participates in amino-acid degradation; L-alanine degradation via dehydrogenase pathway; NH(3) and pyruvate from L-alanine: step 1/1. With respect to regulation, inhibited by CuSO(4) and ZnCl(2). In terms of biological role, catalyzes the reversible reductive amination of pyruvate to L-alanine. However, since the physiological environment of M.tuberculosis has a neutral pH, it can be assumed that the enzyme catalyzes exclusively the formation of L-alanine. May play a role in cell wall synthesis as L-alanine is an important constituent of the peptidoglycan layer. In Mycobacterium tuberculosis (strain ATCC 25618 / H37Rv), this protein is Alanine dehydrogenase (ald).